The primary structure comprises 360 residues: Photosystem II protein D1 (360 aa).

A run of 3 helical transmembrane segments spans residues 29 to 46 (YIGW…SAIS), 118 to 133 (HFFI…EWEL), and 142 to 156 (WICV…AAAA). Residue histidine 118 coordinates chlorophyll a. A pheophytin a-binding site is contributed by tyrosine 126. Positions 170 and 189 each coordinate [CaMn4O5] cluster. A helical transmembrane segment spans residues 197-218 (FHMLGVAGVFGGSLFSAMHGSL). A chlorophyll a-binding site is contributed by histidine 198. A quinone-binding positions include histidine 215 and 264 to 265 (SF). Fe cation is bound at residue histidine 215. Histidine 272 contacts Fe cation. A helical transmembrane segment spans residues 274–288 (FLGAWPVVGIWFTAM). The [CaMn4O5] cluster site is built by histidine 332, glutamate 333, aspartate 342, and alanine 344. Residues 345 to 360 (AGESLPVALVAPAVAA) constitute a propeptide that is removed on maturation.

Belongs to the reaction center PufL/M/PsbA/D family. PSII is composed of 1 copy each of membrane proteins PsbA, PsbB, PsbC, PsbD, PsbE, PsbF, PsbH, PsbI, PsbJ, PsbK, PsbL, PsbM, PsbT, PsbX, PsbY, PsbZ, Psb30/Ycf12, at least 3 peripheral proteins of the oxygen-evolving complex and a large number of cofactors. It forms dimeric complexes. Requires The D1/D2 heterodimer binds P680, chlorophylls that are the primary electron donor of PSII, and subsequent electron acceptors. It shares a non-heme iron and each subunit binds pheophytin, quinone, additional chlorophylls, carotenoids and lipids. D1 provides most of the ligands for the Mn4-Ca-O5 cluster of the oxygen-evolving complex (OEC). There is also a Cl(-1) ion associated with D1 and D2, which is required for oxygen evolution. The PSII complex binds additional chlorophylls, carotenoids and specific lipids. as cofactor. In terms of processing, tyr-161 forms a radical intermediate that is referred to as redox-active TyrZ, YZ or Y-Z. C-terminally processed by CTPA; processing is essential to allow assembly of the oxygen-evolving complex and thus photosynthetic growth.

The protein localises to the plastid. It is found in the chloroplast thylakoid membrane. The catalysed reaction is 2 a plastoquinone + 4 hnu + 2 H2O = 2 a plastoquinol + O2. In terms of biological role, photosystem II (PSII) is a light-driven water:plastoquinone oxidoreductase that uses light energy to abstract electrons from H(2)O, generating O(2) and a proton gradient subsequently used for ATP formation. It consists of a core antenna complex that captures photons, and an electron transfer chain that converts photonic excitation into a charge separation. The D1/D2 (PsbA/PsbD) reaction center heterodimer binds P680, the primary electron donor of PSII as well as several subsequent electron acceptors. The sequence is that of Photosystem II protein D1 from Emiliania huxleyi (Coccolithophore).